A 3011-amino-acid polypeptide reads, in one-letter code: Genome polyprotein (3011 aa).

Serine 2 carries the post-translational modification N-acetylserine; by host. An interaction with STAT1 region spans residues 2–23 (STNPKPQRKTKRNTNRRPQNVK). An interaction with EIF2AK2/PKR region spans residues 2–58 (STNPKPQRKTKRNTNRRPQNVKFPGGGQIVGGVCLLPRRGPRVGVRATRKTSERSQP). The segment at 2–59 (STNPKPQRKTKRNTNRRPQNVKFPGGGQIVGGVCLLPRRGPRVGVRATRKTSERSQPR) is interaction with DDX3X. A disordered region spans residues 2-75 (STNPKPQRKT…PKARRPEGRS (74 aa)). Topologically, residues 2-168 (STNPKPQRKT…EDGVNYATGN (167 aa)) are cytoplasmic. 2 short sequence motifs (nuclear localization signal) span residues 5–13 (PKPQRKTKR) and 38–43 (PRRGPR). Basic residues predominate over residues 7-16 (PQRKTKRNTN). Serine 53 carries the phosphoserine; by host modification. Short sequence motifs (nuclear localization signal) lie at residues 58–64 (PRGRRQP) and 66–71 (PKARRP). Residues 58–68 (PRGRRQPIPKA) show a composition bias toward basic residues. The residue at position 99 (serine 99) is a Phosphoserine; by host. Residues 112–152 (PRRRSRNLGKVIDTLTCGFADLMGYIPLVGAPLGGAARALA) are important for endoplasmic reticulum and mitochondrial localization. Residue serine 116 is modified to Phosphoserine; by host PKA. Residues 122 to 173 (VIDTLTCGFADLMGYIPLVGAPLGGAARALAHGVRVLEDGVNYATGNLPGCS) form an interaction with APOA2 region. The segment at 164–167 (YATG) is important for lipid droplets localization. Residues 169 to 189 (LPGCSFSIFLLALLSCLTVPA) form a helical membrane-spanning segment. Positions 178–191 (LLALLSCLTVPASA) are cleaved as a propeptide — ER anchor for the core protein, removed in mature form by host signal peptidase. The Lumenal segment spans residues 190–358 (SAVEVRNSSG…AGAHWGVLAG (169 aa)). Residues asparagine 196, asparagine 209, and asparagine 234 are each glycosylated (N-linked (GlcNAc...) asparagine; by host). Residues 265-296 (IVGAAAFCSAMYVGDLCGSIFLVGQLFTLSPR) are important for fusion. A glycan (N-linked (GlcNAc...) asparagine; by host) is linked at asparagine 305. Residues 359-379 (PAYYSMVGNWAKVLVVLLLFA) traverse the membrane as a helical segment. The Lumenal segment spans residues 380 to 725 (GVDATTQVTG…WEYVVLLFLL (346 aa)). The interval 385–411 (TQVTGGTAGRNAYRLASLFSTGPSQNI) is HVR1. Asparagine 417, asparagine 423, asparagine 430, and asparagine 448 each carry an N-linked (GlcNAc...) (high mannose) asparagine; by host glycan. 3 disulfide bridges follow: cysteine 429–cysteine 552, cysteine 486–cysteine 494, and cysteine 503–cysteine 508. The segment at 474–479 (YGGKAS) is HVR2. The interval 480-493 (NDQRPYCWHYAPRP) is CD81-binding 1. Residue asparagine 532 is glycosylated (N-linked (GlcNAc...) (high mannose) asparagine; by host). Asparagine 540 carries an N-linked (GlcNAc...) asparagine; by host glycan. The tract at residues 544–551 (PPIGNWFG) is CD81-binding 2. Asparagine 556 carries N-linked (GlcNAc...) (high mannose) asparagine; by host glycosylation. 4 disulfide bridges follow: cysteine 564/cysteine 569, cysteine 581/cysteine 585, cysteine 597/cysteine 620, and cysteine 607/cysteine 644. N-linked (GlcNAc...) (high mannose) asparagine; by host glycosylation is found at asparagine 623 and asparagine 645. Cysteines 652 and 677 form a disulfide. A PKR/eIF2-alpha phosphorylation homology domain (PePHD) region spans residues 660-671 (AELSPLLLSTTQ). Residues 726–746 (LADARICACLWMMLLISQVEA) form a helical membrane-spanning segment. The Lumenal portion of the chain corresponds to 747-757 (ALENLIVLNAA). The helical transmembrane segment at 758 to 778 (SLAGTHGIVPFFIFFCAAWYL) threads the bilayer. Topologically, residues 779–781 (KGK) are cytoplasmic. The helical transmembrane segment at 782-803 (WAPGLVYSVYGMWPLLLLLLAL) threads the bilayer. Residues 804-813 (PQRAYALDQE) are Lumenal-facing. The chain crosses the membrane as a helical span at residues 814-834 (LAASCGAVVFISLAVLTLSPY). Topologically, residues 835-838 (YKQY) are cytoplasmic. The helical transmembrane segment at 839–859 (MARGIWWLQYMLTRAEALLHV) threads the bilayer. Topologically, residues 860-881 (WVPSLNARGGRDGAILLMCVLH) are lumenal. A helical transmembrane segment spans residues 882-902 (PHLLFDITKIMLAILGPLWIL). Residues 903–1026 (QASLLRVPYF…ALTDKGWRLL (124 aa)) form the Peptidase C18 domain. The Cytoplasmic portion of the chain corresponds to 903–1657 (QASLLRVPYF…CMSADLEVVT (755 aa)). The tract at residues 904–1206 (ASLLRVPYFV…PVESLETTMR (303 aa)) is protease NS2-3. The S-palmitoyl cysteine; by host moiety is linked to residue cysteine 922. The segment at 929-949 (AGGHYVQMALLKLGALTGTYI) is interaction with host SCPS1. Residues histidine 952, glutamate 972, and cysteine 993 each act as for protease NS2 activity; shared with dimeric partner in the active site. Residues 1027–1208 (APITAYAQQT…ESLETTMRSP (182 aa)) enclose the Peptidase S29 domain. Active-site charge relay system; for serine protease NS3 activity residues include histidine 1083 and aspartate 1107. Cysteine 1123 and cysteine 1125 together coordinate Zn(2+). Serine 1165 acts as the Charge relay system; for serine protease NS3 activity in catalysis. 2 residues coordinate Zn(2+): cysteine 1171 and histidine 1175. Residues 1217–1369 (PTVPQSYQVA…SNIEEVALSA (153 aa)) form the Helicase ATP-binding domain. Position 1230–1237 (1230–1237 (APTGSGKS)) interacts with ATP. Residues serine 1237 and glutamate 1317 each contribute to the Mg(2+) site. Positions 1316–1319 (DECH) match the DECH box motif. Positions 1486–1497 (QRRGRTGRGKHG) are RNA-binding. The helical transmembrane segment at 1658–1678 (STWVLVGGVLAALAAYCLSTG) threads the bilayer. The tract at residues 1679–1690 (SVVIVGRIILGG) is NS3-binding. At 1679 to 1805 (SVVIVGRIIL…AVTSPLTTQQ (127 aa)) the chain is on the cytoplasmic side. Residues 1806-1824 (TLFFNILGGWVAAQLASPA) traverse the membrane as a helical segment. Over 1825–1828 (AATA) the chain is Lumenal. Residues 1829-1849 (FVGAGITGAVVGSVGLGKVLV) form a helical membrane-spanning segment. A topological domain (cytoplasmic) is located at residue aspartate 1850. The helical transmembrane segment at 1851–1871 (IIAGYGAGVAGALVAFKIMSG) threads the bilayer. Residues 1872 to 1881 (ETPTTEDLVN) are Lumenal-facing. The helical transmembrane segment at 1882 to 1902 (LLPAILSPGALVVGVVCAAIL) threads the bilayer. Residues 1903–1972 (RRHVGPGEGA…WISSDCIAPC (70 aa)) are Cytoplasmic-facing. S-palmitoyl cysteine; by host attachment occurs at residues cysteine 1968 and cysteine 1972. An intramembrane segment occupies 1973-2002 (ASSWLKDVWDWICEVLSDFKNWLKAKLVPQ). Residues 2003–2990 (LPGIPFVSCQ…YHSVSHARPR (988 aa)) lie on the Cytoplasmic side of the membrane. Cysteine 2011, cysteine 2029, cysteine 2031, and cysteine 2052 together coordinate Zn(2+). The segment at 2120–2208 (EFFTEVDGVR…ASSSASQLSA (89 aa)) is FKBP8-binding. The tract at residues 2120–2332 (EFFTEVDGVR…PVPPPRRKRT (213 aa)) is transcriptional activation. Residues 2135 to 2139 (PPCKP) are interaction with non-structural protein 4A. A disordered region spans residues 2187-2219 (ARRLKRGSPPSLASSSASQLSAPSLKATCTTHH). An interaction with host SKP2 region spans residues 2189-2441 (RLKRGSPPSL…TPCASEEAKL (253 aa)). Residue serine 2194 is modified to Phosphoserine; by host; in p56. Positions 2194-2211 (SPPSLASSSASQLSAPSL) are enriched in low complexity. Phosphoserine; by host; in p58 is present on residues serine 2197, serine 2201, serine 2204, serine 2207, and serine 2210. The segment at 2210 to 2249 (SLKATCTTHHDSPDADLIEANLLWRQEMGGNITRVESENK) is ISDR. The segment at 2210–2275 (SLKATCTTHH…REISIPAEIL (66 aa)) is interaction with EIF2AK2/PKR. Positions 2249 to 2306 (KIVVLDSFDPLVAEEDDREISIPAEILRKFKQFPPAMPIWARPDYNPPLVEPWKRPDY) are NS4B-binding. An SH3-binding motif is present at residues 2322–2325 (TPVP). The Nuclear localization signal motif lies at 2326 to 2334 (PPRRKRTVV). Lysine 2350 is covalently cross-linked (Glycyl lysine isopeptide (Lys-Gly) (interchain with G-Cter in ubiquitin)). Positions 2352–2369 (FGSSTTSGVTSGEATESS) are enriched in low complexity. A disordered region spans residues 2352–2409 (FGSSTTSGVTSGEATESSPAPSCGGELDSEAESYSSMPPLEGEPGDPDLSDGSWSTVS). The V3 stretch occupies residues 2354 to 2377 (SSTTSGVTSGEATESSPAPSCGGE). Phosphoserine; by host occurs at positions 2449 and 2462. The RdRp catalytic domain occupies 2634–2752 (PMGFSYDTRC…ICESAGVQED (119 aa)). Mg(2+) is bound by residues aspartate 2640, aspartate 2738, and aspartate 2739. The helical transmembrane segment at 2991-3011 (LFLWCLLLLSVGVGIYLLPNR) threads the bilayer.

Belongs to the hepacivirus polyprotein family. Homooligomer. Interacts with E1 (via C-terminus). Interacts with the non-structural protein 5A. Interacts (via N-terminus) with host STAT1 (via SH2 domain); this interaction results in decreased STAT1 phosphorylation and ubiquitin-mediated proteasome-dependent STAT1 degradation, leading to decreased IFN-stimulated gene transcription. Interacts with host STAT3; this interaction constitutively activates STAT3. Interacts with host LTBR receptor. Interacts with host TNFRSF1A receptor and possibly induces apoptosis. Interacts with host HNRPK. Interacts with host YWHAE. Interacts with host UBE3A/E6AP. Interacts with host DDX3X. Interacts with host APOA2. Interacts with host RXRA protein. Interacts with host SP110 isoform 3/Sp110b; this interaction sequesters the transcriptional corepressor SP110 away from the nucleus. Interacts with host CREB3 nuclear transcription protein; this interaction triggers cell transformation. Interacts with host ACY3. Interacts with host C1QR1. Interacts with host RBM24; this interaction, which enhances the interaction of the mature core protein with 5'-UTR, may inhibit viral translation and favor replication. Interacts with host EIF2AK2/PKR; this interaction induces the autophosphorylation of EIF2AK2. Part of the viral assembly initiation complex composed of NS2, E1, E2, NS3, NS4A, NS5A and the mature core protein. In terms of assembly, forms a heterodimer with envelope glycoprotein E2. Interacts with mature core protein. Interacts with protease NS2. The heterodimer E1/E2 interacts with host CLDN1; this interaction plays a role in viral entry into host cell. Interacts with host SPSB2 (via C-terminus). Part of the viral assembly initiation complex composed of NS2, E1, E2, NS3, NS4A, NS5A and the mature core protein. Interacts with host NEURL3; this interaction prevents E1 binding to glycoprotein E2. As to quaternary structure, forms a heterodimer with envelope glycoprotein E1. Interacts with host CD81 and SCARB1 receptors; these interactions play a role in viral entry into host cell. Interacts with host EIF2AK2/PKR; this interaction inhibits EIF2AK2 and probably allows the virus to evade the innate immune response. Interacts with host CD209/DC-SIGN and CLEC4M/DC-SIGNR. Interact with host SPCS1; this interaction is essential for viral particle assembly. Interacts with protease NS2. The heterodimer E1/E2 interacts with host CLDN1; this interaction plays a role in viral entry into host cell. Part of the viral assembly initiation complex composed of NS2, E1, E2, NS3, NS4A, NS5A and the mature core protein. Interacts with host SLC3A2/4F2hc; the interaction may facilitate viral entry into host cell. Interacts with human PLSCR1. Homohexamer. Homoheptamer. Interacts with protease NS2. In terms of assembly, homodimer. Interacts with host SPCS1; this interaction is essential for viral particle assembly. Interacts with envelope glycoprotein E1. Interacts with envelope glycoprotein E2. Interacts with viroporin p7. Interacts with serine protease/helicase NS3. Part of the replication complex composed of NS2, NS3, NS4A, NS4B, NS5A and the RNA-directed RNA polymerase embedded in an ER-derived membranous web. Part of the viral assembly initiation complex composed of NS2, E1, E2, NS3, NS4A, NS5A and the mature core protein. As to quaternary structure, interacts with protease NS2. Interacts with non-structural protein 4A; this interaction stabilizes the folding of NS3 serine protease. NS3-NS4A interaction is essential for NS3 activation and allows membrane anchorage of the latter. NS3/NS4A complex also prevents phosphorylation of host IRF3, thus preventing the establishment of dsRNA induced antiviral state. Interacts with host MAVS; this interaction leads to the cleavage and inhibition of host MAVS. Interacts with host TICAM1; this interaction leads to the cleavage and inhibition of host TICAM1. Interacts with host TANK-binding kinase/TBK1; this interaction results in the inhibition of the association between TBK1 and IRF3, which leads to the inhibition of IRF3 activation. Interacts with host RBM24. Part of the replication complex composed of NS2, NS3, NS4A, NS4B, NS5A and the RNA-directed RNA polymerase embedded in an ER-derived membranous web. Part of the viral assembly initiation complex composed of NS2, E1, E2, NS3, NS4A, NS5A and the mature core protein. Interacts with NS3 serine protease; this interaction stabilizes the folding of NS3 serine protease. NS3-NS4A interaction is essential for NS3 activation and allows membrane anchorage of the latter. Interacts with non-structural protein 5A (via N-terminus). Part of the replication complex composed of NS2, NS3, NS4A, NS4B, NS5A and the RNA-directed RNA polymerase embedded in an ER-derived membranous web. Part of the viral assembly initiation complex composed of NS2, E1, E2, NS3, NS4A, NS5A and the mature core protein. In terms of assembly, homomultimer. Interacts with non-structural protein NS5A. Interacts with host PLA2G4C; this interaction likely initiates the recruitment of replication complexes to lipid droplets. Interacts with host STING; this interaction disrupts the interaction between STING and TBK1 thereby suppressing the interferon signaling. Part of the replication complex composed of NS2, NS3, NS4A, NS4B, NS5A and the RNA-directed RNA polymerase embedded in an ER-derived membranous web. As to quaternary structure, monomer. Homodimer; dimerization is required for RNA-binding. Interacts with the mature core protein. Interacts (via N-terminus) with non-structural protein 4A. Interacts with non-structural protein 4B. Interacts (via region D2) with RNA-directed RNA polymerase. Part of the viral assembly initiation complex composed of NS2, E1, E2, NS3, NS4A, NS5A and the mature core protein. Part of the replication complex composed of NS2, NS3, NS4A, NS4B, NS5A and the RNA-directed RNA polymerase embedded in an ER-derived membranous web. Interacts with host GRB2. Interacts with host BIN1. Interacts with host PIK3R1. Interacts with host SRCAP. Interacts with host FKBP8. Interacts (via C-terminus) with host VAPB (via MSP domain). Interacts with host EIF2AK2/PKR; this interaction leads to disruption of EIF2AK2 dimerization by NS5A and probably allows the virus to evade the innate immune response. Interacts (via N-terminus) with host PACSIN2 (via N-terminus); this interaction attenuates protein kinase C alpha-mediated phosphorylation of PACSIN2 by disrupting the interaction between PACSIN2 and PRKCA. Interacts (via N-terminus) with host SRC kinase (via SH2 domain). Interacts with most Src-family kinases. Interacts with host IFI27 and SKP2; promotes the ubiquitin-mediated proteasomal degradation of NS5A. Interacts with host GPS2. Interacts with host TNFRSF21; this interaction allows the modulation by the virus of JNK, p38 MAPK, STAT3, and Akt signaling pathways in a DR6-dependent manner. Interacts (via N-terminus) with host CIDEB (via N-terminus); this interaction seems to regulate the association of HCV particles with APOE. Interacts with host CHKA/Choline Kinase-alpha; CHKA bridges host PI4KA and NS5A and potentiates NS5A-stimulated PI4KA activity, which then facilitates the targeting of the ternary complex to the ER for viral replication. Interacts with host SPSB2 (via C-terminus); this interaction targets NS5A for ubiquitination and degradation. Interacts with host RAB18; this interaction may promote the association of NS5A and other replicase components with lipid droplets. Interacts (via region D2) with host PPIA/CYPA; the interaction stimulates RNA-binding ability of NS5A and is dependent on the peptidyl-prolyl cis-trans isomerase activity of PPIA/CYPA. Interacts with host TRIM14; this interaction induces the degradation of NS5A. Homooligomer. Interacts with non-structural protein 5A. Interacts with host VAPB. Interacts with host PRK2/PKN2. Interacts with host HNRNPA1 and SEPT6; these interactions facilitate viral replication. Part of the replication complex composed of NS2, NS3, NS4A, NS4B, NS5A and the RNA-directed RNA polymerase. Requires Zn(2+) as cofactor. It depends on Mg(2+) as a cofactor. In terms of processing, specific enzymatic cleavages in vivo yield mature proteins. The structural proteins, core, E1, E2 and p7 are produced by proteolytic processing by host signal peptidases. The core protein precursor is synthesized as a 23 kDa, which is retained in the ER membrane through the hydrophobic signal peptide. Cleavage by the signal peptidase releases the 21 kDa mature core protein. The cleavage of the core protein precursor occurs between aminoacids 176 and 188 but the exact cleavage site is not known. Some degraded forms of the core protein appear as well during the course of infection. The other proteins (p7, NS2, NS3, NS4A, NS4B, NS5A and NS5B) are cleaved by the viral proteases. Autoprocessing between NS2 and NS3 is mediated by the NS2 cysteine protease catalytic domain and regulated by the NS3 N-terminal domain. Phosphorylated by host PKC and PKA. Post-translationally, ubiquitinated; mediated by UBE3A and leading to core protein subsequent proteasomal degradation. In terms of processing, highly N-glycosylated. Palmitoylation is required for NS2/3 autoprocessing and E2 recruitment to membranes. Post-translationally, palmitoylated. This modification may play a role in its polymerization or in protein-protein interactions. In terms of processing, phosphorylated on serines in a basal form termed p56. p58 is a hyperphosphorylated form of p56. p56 and p58 coexist in the cell in roughly equivalent amounts. Hyperphosphorylation is dependent on the presence of NS4A. Host CSNK1A1/CKI-alpha or RPS6KB1 kinases may be responsible for NS5A phosphorylation. Tyrosine phosphorylation is essential for the interaction with host SRC. Post-translationally, the N-terminus is phosphorylated by host PRK2/PKN2.

The protein resides in the host endoplasmic reticulum membrane. It localises to the host mitochondrion membrane. Its subcellular location is the virion. The protein localises to the host cytoplasm. It is found in the host nucleus. The protein resides in the host lipid droplet. It localises to the virion membrane. Its subcellular location is the host mitochondrion. The protein localises to the host cell membrane. It is found in the host perinuclear region. The catalysed reaction is Hydrolysis of four peptide bonds in the viral precursor polyprotein, commonly with Asp or Glu in the P6 position, Cys or Thr in P1 and Ser or Ala in P1'.. It catalyses the reaction a ribonucleoside 5'-triphosphate + H2O = a ribonucleoside 5'-diphosphate + phosphate + H(+). It carries out the reaction ATP + H2O = ADP + phosphate + H(+). The enzyme catalyses RNA(n) + a ribonucleoside 5'-triphosphate = RNA(n+1) + diphosphate. Its activity is regulated as follows. Inhibited by the antiviral drug hexamethylene amiloride. Inhibition by amantadine appears to be genotype-dependent. Also inhibited by long-alkyl-chain iminosugar derivatives. Activity is up-regulated by PRK2/PKN2-mediated phosphorylation. In terms of biological role, packages viral RNA to form a viral nucleocapsid, and promotes virion budding. Participates in the viral particle production as a result of its interaction with the non-structural protein 5A. Binds RNA and may function as a RNA chaperone to induce the RNA structural rearrangements taking place during virus replication. Modulates viral translation initiation by interacting with viral IRES and 40S ribosomal subunit. Affects various cell signaling pathways, host immunity and lipid metabolism. Prevents the establishment of cellular antiviral state by blocking the interferon-alpha/beta (IFN-alpha/beta) and IFN-gamma signaling pathways and by blocking the formation of phosphorylated STAT1 and promoting ubiquitin-mediated proteasome-dependent degradation of STAT1. Activates STAT3 leading to cellular transformation. Regulates the activity of cellular genes, including c-myc and c-fos. May repress the promoter of p53, and sequester CREB3 and SP110 isoform 3/Sp110b in the cytoplasm. Represses cell cycle negative regulating factor CDKN1A, thereby interrupting an important check point of normal cell cycle regulation. Targets transcription factors involved in the regulation of inflammatory responses and in the immune response: suppresses TNF-induced NF-kappa-B activation, and activates AP-1. Binds to dendritic cells (DCs) via C1QR1, resulting in down-regulation of T-lymphocytes proliferation. Alters lipid metabolism by interacting with hepatocellular proteins involved in lipid accumulation and storage. Induces up-regulation of FAS promoter activity, and thereby contributes to the increased triglyceride accumulation in hepatocytes (steatosis). Its function is as follows. Forms a heterodimer with envelope glycoprotein E2, which mediates virus attachment to the host cell, virion internalization through clathrin-dependent endocytosis and fusion with host membrane. Fusion with the host cell is most likely mediated by both E1 and E2, through conformational rearrangements of the heterodimer required for fusion rather than a classical class II fusion mechanism. E1/E2 heterodimer binds host apolipoproteins such as APOB and ApoE thereby forming a lipo-viro-particle (LVP). APOE associated to the LVP allows the initial virus attachment to cell surface receptors such as the heparan sulfate proteoglycans (HSPGs), syndecan-1 (SDC1), syndecan-1 (SDC2), the low-density lipoprotein receptor (LDLR) and scavenger receptor class B type I (SCARB1). The cholesterol transfer activity of SCARB1 allows E2 exposure and binding of E2 to SCARB1 and the tetraspanin CD81. E1/E2 heterodimer binding on CD81 activates the epithelial growth factor receptor (EGFR) signaling pathway. Diffusion of the complex E1-E2-EGFR-SCARB1-CD81 to the cell lateral membrane allows further interaction with Claudin 1 (CLDN1) and occludin (OCLN) to finally trigger HCV entry. Functionally, forms a heterodimer with envelope glycoprotein E1, which mediates virus attachment to the host cell, virion internalization through clathrin-dependent endocytosis and fusion with host membrane. Fusion with the host cell is most likely mediated by both E1 and E2, through conformational rearrangements of the heterodimer required for fusion rather than a classical class II fusion mechanism. The interaction between envelope glycoprotein E2 and host apolipoprotein E/APOE allows the proper assembly, maturation and infectivity of the viral particles. This interaction is probably promoted via the up-regulation of cellular autophagy by the virus. E1/E2 heterodimer binds host apolipoproteins such as APOB and APOE thereby forming a lipo-viro-particle (LVP). APOE associated to the LVP allows the initial virus attachment to cell surface receptors such as the heparan sulfate proteoglycans (HSPGs), syndecan-1 (SDC1), syndecan-1 (SDC2), the low-density lipoprotein receptor (LDLR) and scavenger receptor class B type I (SCARB1). The cholesterol transfer activity of SCARB1 allows E2 exposure and binding of E2 to SCARB1 and the tetraspanin CD81. E1/E2 heterodimer binding on CD81 activates the epithelial growth factor receptor (EGFR) signaling pathway. Diffusion of the complex E1-E2-EGFR-SCARB1-CD81 to the cell lateral membrane allows further interaction with Claudin 1 (CLDN1) and occludin (OCLN) to finally trigger HCV entry. Inhibits host EIF2AK2/PKR activation, preventing the establishment of an antiviral state. Viral ligand for CD209/DC-SIGN and CLEC4M/DC-SIGNR, which are respectively found on dendritic cells (DCs), and on liver sinusoidal endothelial cells and macrophage-like cells of lymph node sinuses. These interactions allow the capture of circulating HCV particles by these cells and subsequent facilitated transmission to permissive cells such as hepatocytes and lymphocyte subpopulations. The interaction between E2 and host amino acid transporter complex formed by SLC3A2 and SLC7A5/LAT1 may facilitate viral entry into host cell. Ion channel protein that acts as a viroporin and plays an essential role in the assembly, envelopment and secretion of viral particles. Regulates the host cell secretory pathway, which induces the intracellular retention of viral glycoproteins and favors assembly of viral particles. Creates a pore in acidic organelles and releases Ca(2+) and H(+) in the cytoplasm of infected cells, leading to a productive viral infection. High levels of cytoplasmic Ca(2+) may trigger membrane trafficking and transport of viral ER-associated proteins to viroplasms, sites of viral genome replication. This ionic imbalance induces the assembly of the inflammasome complex, which triggers the maturation of pro-IL-1beta into IL-1beta through the action of caspase-1. Targets also host mitochondria and induces mitochondrial depolarization. In addition of its role as a viroporin, acts as a lipid raft adhesion factor. In terms of biological role, cysteine protease required for the proteolytic auto-cleavage between the non-structural proteins NS2 and NS3. The N-terminus of NS3 is required for the function of NS2 protease (active region NS2-3). Promotes the initiation of viral particle assembly by mediating the interaction between structural and non-structural proteins. Its function is as follows. Displays three enzymatic activities: serine protease with a chymotrypsin-like fold, NTPase and RNA helicase. NS3 serine protease, in association with NS4A, is responsible for the cleavages of NS3-NS4A, NS4A-NS4B, NS4B-NS5A and NS5A-NS5B. The NS3/NS4A complex prevents phosphorylation of host IRF3, thus preventing the establishment of dsRNA induced antiviral state. The NS3/NS4A complex induces host amino acid transporter component SLC3A2, thus contributing to HCV propagation. NS3 RNA helicase binds to RNA and unwinds both dsDNA and dsRNA in the 3' to 5' direction, and likely resolves RNA complicated stable secondary structures in the template strand. Binds a single ATP and catalyzes the unzipping of a single base pair of dsRNA. Inhibits host antiviral proteins TBK1 and IRF3 thereby preventing the establishment of an antiviral state. Cleaves host MAVS/CARDIF thereby preventing the establishment of an antiviral state. Cleaves host TICAM1/TRIF, thereby disrupting TLR3 signaling and preventing the establishment of an antiviral state. Functionally, induces a specific membrane alteration that serves as a scaffold for the virus replication complex. This membrane alteration gives rise to the so-called ER-derived membranous web that contains the replication complex. NS4B self-interaction contributes to its function in membranous web formation. Promotes host TRIF protein degradation in a CASP8-dependent manner thereby inhibiting host TLR3-mediated interferon signaling. Disrupts the interaction between STING and TBK1 contributing to the inhibition of interferon signaling. Phosphorylated protein that is indispensable for viral replication and assembly. Both hypo- and hyperphosphorylated states are required for the viral life cycle. The hyperphosphorylated form of NS5A is an inhibitor of viral replication. Involved in RNA-binding and especially in binding to the viral genome. Zinc is essential for RNA-binding. Participates in the viral particle production as a result of its interaction with the mature viral core protein. Its interaction with host VAPB may target the viral replication complex to vesicles. Down-regulates viral IRES translation initiation. Mediates interferon resistance, presumably by interacting with and inhibiting host EIF2AK2/PKR. Prevents BIN1-induced apoptosis. Acts as a transcriptional activator of some host genes important for viral replication when localized in the nucleus. Via the interaction with host PACSIN2, modulates lipid droplet formation in order to promote virion assembly. Modulates TNFRSF21/DR6 signaling pathway for viral propagation. In terms of biological role, RNA-dependent RNA polymerase that performs primer-template recognition and RNA synthesis during viral replication. Initiates RNA transcription/replication at a flavin adenine dinucleotide (FAD), resulting in a 5'- FAD cap on viral RNAs. In this way, recognition of viral 5' RNA by host pattern recognition receptors can be bypassed, thereby evading activation of antiviral pathways. This chain is Genome polyprotein, found in Hepatitis C virus genotype 1c (isolate India) (HCV).